The sequence spans 428 residues: Something about silencing protein 10 (428 aa).

A disordered region spans residues 1 to 93 (MDSDGDDYVM…NTMDWGSKRS (93 aa)). Composition is skewed to acidic residues over residues 15–24 (QEYDDEEREI) and 46–62 (SDDD…EQQD). Residues S152, S323, S324, and S337 each carry the phosphoserine modification. The interval 317-386 (GQQASVSSDD…LRNPRVKHRG (70 aa)) is disordered. Over residues 324–336 (SDDDDNDDDDDAE) the composition is skewed to acidic residues. Residues 344 to 353 (EEAGEEEEEE) are compositionally biased toward acidic residues. Over residues 370–386 (TPHRKKELRNPRVKHRG) the composition is skewed to basic residues.

It belongs to the SAS10 family.

It localises to the nucleus. In terms of biological role, essential for gene silencing: has a role in the structure of silenced chromatin. May be involved in gene regulation during development. Binds RNA. In Drosophila melanogaster (Fruit fly), this protein is Something about silencing protein 10.